Reading from the N-terminus, the 238-residue chain is ATP-dependent dethiobiotin synthetase BioD (238 aa).

12–17 is an ATP binding site; that stretch reads EVGKTV. Residue Thr16 participates in Mg(2+) binding. Lys37 is an active-site residue. Thr41 is a binding site for substrate. ATP contacts are provided by residues Asp50, 109 to 112, 170 to 171, and 200 to 202; these read EGAG, GS, and PAG. Residues Asp50 and Glu109 each contribute to the Mg(2+) site.

The protein belongs to the dethiobiotin synthetase family. In terms of assembly, homodimer. It depends on Mg(2+) as a cofactor.

It is found in the cytoplasm. It carries out the reaction (7R,8S)-7,8-diammoniononanoate + CO2 + ATP = (4R,5S)-dethiobiotin + ADP + phosphate + 3 H(+). The protein operates within cofactor biosynthesis; biotin biosynthesis; biotin from 7,8-diaminononanoate: step 1/2. Functionally, catalyzes a mechanistically unusual reaction, the ATP-dependent insertion of CO2 between the N7 and N8 nitrogen atoms of 7,8-diaminopelargonic acid (DAPA, also called 7,8-diammoniononanoate) to form a ureido ring. The chain is ATP-dependent dethiobiotin synthetase BioD from Streptomyces coelicolor (strain ATCC BAA-471 / A3(2) / M145).